The primary structure comprises 361 residues: Chorismate synthase (361 aa).

Residue R47 coordinates NADP(+). FMN is bound by residues 124–126 (RAS), G286, 301–305 (KPTAT), and R327.

The protein belongs to the chorismate synthase family. As to quaternary structure, homotetramer. The cofactor is FMNH2.

The catalysed reaction is 5-O-(1-carboxyvinyl)-3-phosphoshikimate = chorismate + phosphate. It functions in the pathway metabolic intermediate biosynthesis; chorismate biosynthesis; chorismate from D-erythrose 4-phosphate and phosphoenolpyruvate: step 7/7. In terms of biological role, catalyzes the anti-1,4-elimination of the C-3 phosphate and the C-6 proR hydrogen from 5-enolpyruvylshikimate-3-phosphate (EPSP) to yield chorismate, which is the branch point compound that serves as the starting substrate for the three terminal pathways of aromatic amino acid biosynthesis. This reaction introduces a second double bond into the aromatic ring system. The sequence is that of Chorismate synthase from Akkermansia muciniphila (strain ATCC BAA-835 / DSM 22959 / JCM 33894 / BCRC 81048 / CCUG 64013 / CIP 107961 / Muc).